Consider the following 746-residue polypeptide: 4-hydroxy-3-methylbut-2-en-1-yl diphosphate synthase (flavodoxin) (746 aa).

Residues cysteine 653, cysteine 656, cysteine 687, and glutamate 694 each coordinate [4Fe-4S] cluster.

This sequence belongs to the IspG family. [4Fe-4S] cluster serves as cofactor.

The enzyme catalyses (2E)-4-hydroxy-3-methylbut-2-enyl diphosphate + oxidized [flavodoxin] + H2O + 2 H(+) = 2-C-methyl-D-erythritol 2,4-cyclic diphosphate + reduced [flavodoxin]. It functions in the pathway isoprenoid biosynthesis; isopentenyl diphosphate biosynthesis via DXP pathway; isopentenyl diphosphate from 1-deoxy-D-xylulose 5-phosphate: step 5/6. In terms of biological role, converts 2C-methyl-D-erythritol 2,4-cyclodiphosphate (ME-2,4cPP) into 1-hydroxy-2-methyl-2-(E)-butenyl 4-diphosphate. This Chlorobaculum tepidum (strain ATCC 49652 / DSM 12025 / NBRC 103806 / TLS) (Chlorobium tepidum) protein is 4-hydroxy-3-methylbut-2-en-1-yl diphosphate synthase (flavodoxin).